The sequence spans 414 residues: Cell division protein FtsA (414 aa).

Belongs to the FtsA/MreB family. As to quaternary structure, self-interacts. Interacts with FtsZ.

It localises to the cell inner membrane. Functionally, cell division protein that is involved in the assembly of the Z ring. May serve as a membrane anchor for the Z ring. The polypeptide is Cell division protein FtsA (Neisseria meningitidis serogroup B (strain ATCC BAA-335 / MC58)).